The primary structure comprises 491 residues: Synaptotagmin-9 (491 aa).

The Vesicular portion of the chain corresponds to methionine 1–valine 52. The interval cysteine 9–glutamine 31 is cysteine motif. A helical membrane pass occupies residues serine 53 to valine 73. Residues serine 74–arginine 491 are Cytoplasmic-facing. Position 177 is a phosphoserine (serine 177). C2 domains follow at residues alanine 220–lysine 341 and aspartate 352–histidine 485. Ca(2+) is bound by residues aspartate 251, aspartate 257, aspartate 309, phenylalanine 310, aspartate 311, serine 314, aspartate 317, aspartate 383, aspartate 389, aspartate 443, and aspartate 445.

Belongs to the synaptotagmin family. As to quaternary structure, homodimer; disulfide-linked via the cysteine motif. Can also form heterodimers with SYT3, SYT6, SYT7 and SYT10. The cofactor is Ca(2+).

It is found in the cytoplasmic vesicle. It localises to the secretory vesicle. Its subcellular location is the synaptic vesicle membrane. In terms of biological role, may be involved in Ca(2+)-dependent exocytosis of secretory vesicles through Ca(2+) and phospholipid binding to the C2 domain or may serve as Ca(2+) sensors in the process of vesicular trafficking and exocytosis. This is Synaptotagmin-9 (SYT9) from Homo sapiens (Human).